The following is a 1115-amino-acid chain: Ubiquitin C-terminal hydrolase 13 (1115 aa).

The tract at residues 1–51 is disordered; the sequence is MTMMTPPPLDQQEDEEMLVPNPDLVEGPQPMEVAQTDPAATAVENPPPEDP. Residues 53-178 enclose the MATH domain; that stretch reads SLKFTWTIPM…NDTVLIEAEV (126 aa). Positions 198–522 constitute a USP domain; sequence VGLKNQGATC…NAYMLVYIRE (325 aa). The Nucleophile role is filled by Cys-207. Residue His-454 is the Proton acceptor of the active site.

Belongs to the peptidase C19 family. In terms of assembly, interacts with SIC/RON3. Interacts with RGI1 and RGI2.

It catalyses the reaction Thiol-dependent hydrolysis of ester, thioester, amide, peptide and isopeptide bonds formed by the C-terminal Gly of ubiquitin (a 76-residue protein attached to proteins as an intracellular targeting signal).. Functionally, recognizes and hydrolyzes the peptide bond at the C-terminal Gly of ubiquitin. Involved in the processing of poly-ubiquitin precursors as well as that of ubiquitinated proteins. Positive regulator of root meristem development that, together with UBP12, prevents the ubiquitination and turnover of RGFR1 induced by the RGF1 hormone peptide, thus influencing PLT1 and PLT2 expression. This Arabidopsis thaliana (Mouse-ear cress) protein is Ubiquitin C-terminal hydrolase 13.